The primary structure comprises 344 residues: Methionine import ATP-binding protein MetN 1 (344 aa).

The region spanning 2–241 is the ABC transporter domain; sequence IELRNLSQRF…PHHEVTRALI (240 aa). 38–45 serves as a coordination point for ATP; sequence GRSGAGKS.

The protein belongs to the ABC transporter superfamily. Methionine importer (TC 3.A.1.24) family. The complex is composed of two ATP-binding proteins (MetN), two transmembrane proteins (MetI) and a solute-binding protein (MetQ).

It localises to the cell inner membrane. It catalyses the reaction L-methionine(out) + ATP + H2O = L-methionine(in) + ADP + phosphate + H(+). The enzyme catalyses D-methionine(out) + ATP + H2O = D-methionine(in) + ADP + phosphate + H(+). In terms of biological role, part of the ABC transporter complex MetNIQ involved in methionine import. Responsible for energy coupling to the transport system. The sequence is that of Methionine import ATP-binding protein MetN 1 from Burkholderia orbicola (strain AU 1054).